We begin with the raw amino-acid sequence, 487 residues long: 3-octaprenyl-4-hydroxybenzoate carboxy-lyase (487 aa).

Mn(2+) is bound at residue Asn-172. Residues 175–177 (IYR), 189–191 (RWL), and 194–195 (RG) each bind prenylated FMN. Glu-238 serves as a coordination point for Mn(2+). The active-site Proton donor is the Asp-287.

It belongs to the UbiD family. Homohexamer. The cofactor is prenylated FMN. Requires Mn(2+) as cofactor.

Its subcellular location is the cell membrane. It catalyses the reaction a 4-hydroxy-3-(all-trans-polyprenyl)benzoate + H(+) = a 2-(all-trans-polyprenyl)phenol + CO2. It participates in cofactor biosynthesis; ubiquinone biosynthesis. Its function is as follows. Catalyzes the decarboxylation of 3-octaprenyl-4-hydroxy benzoate to 2-octaprenylphenol, an intermediate step in ubiquinone biosynthesis. The protein is 3-octaprenyl-4-hydroxybenzoate carboxy-lyase of Nitrosospira multiformis (strain ATCC 25196 / NCIMB 11849 / C 71).